A 400-amino-acid chain; its full sequence is TBC1 domain family member 13 (400 aa).

In terms of domain architecture, Rab-GAP TBC spans 35–345; the sequence is PCEGGLRCLC…RIWDSLFADG (311 aa).

As to quaternary structure, interacts with RAB1A and RAB10; in a GTP-dependent manner. Expressed in adipocytes.

It localises to the membrane. The protein resides in the cytoplasm. Functionally, acts as a GTPase-activating protein for RAB35. Together with RAB35 may be involved in regulation of insulin-induced glucose transporter SLC2A4/GLUT4 translocation to the plasma membrane in adipocytes. The polypeptide is TBC1 domain family member 13 (Tbc1d13) (Mus musculus (Mouse)).